An 88-amino-acid chain; its full sequence is EKC/KEOPS complex subunit SPAC4H3.13 (88 aa).

It belongs to the CTAG/PCC1 family. In terms of assembly, component of the EKC/KEOPS complex composed of at least of SPAP27G11.07c/BUD32, cgi121, gon7, pgp2 and SPAC4H3.13/PCC1; the whole complex dimerizes.

It is found in the cytoplasm. The protein localises to the nucleus. Its subcellular location is the chromosome. The protein resides in the telomere. Component of the EKC/KEOPS complex that is required for the formation of a threonylcarbamoyl group on adenosine at position 37 (t(6)A37) in tRNAs that read codons beginning with adenine. The complex is probably involved in the transfer of the threonylcarbamoyl moiety of threonylcarbamoyl-AMP (TC-AMP) to the N6 group of A37. SPAC4H3.13/PCC1 functions as a dimerization module for the complex. The EKC/KEOPS complex also promotes both telomere uncapping and telomere elongation. The complex is required for efficient recruitment of transcriptional coactivators. The chain is EKC/KEOPS complex subunit SPAC4H3.13 from Schizosaccharomyces pombe (strain 972 / ATCC 24843) (Fission yeast).